Consider the following 152-residue polypeptide: Deoxyuridine 5'-triphosphate nucleotidohydrolase (152 aa).

Substrate-binding positions include 71 to 73 (RSG), Asn-84, 88 to 90 (LID), and Met-98.

It belongs to the dUTPase family. In terms of assembly, homotrimer. Mg(2+) serves as cofactor.

The catalysed reaction is dUTP + H2O = dUMP + diphosphate + H(+). Its pathway is pyrimidine metabolism; dUMP biosynthesis; dUMP from dCTP (dUTP route): step 2/2. Its function is as follows. This enzyme is involved in nucleotide metabolism: it produces dUMP, the immediate precursor of thymidine nucleotides and it decreases the intracellular concentration of dUTP so that uracil cannot be incorporated into DNA. The polypeptide is Deoxyuridine 5'-triphosphate nucleotidohydrolase (Escherichia coli O157:H7).